A 569-amino-acid polypeptide reads, in one-letter code: Peroxynitrite isomerase THAP4 (569 aa).

The segment at 1-85 adopts a THAP-type zinc-finger fold; it reads MVICCAAVNC…LKPTAVPSIF (85 aa). The segment at 88 to 216 is disordered; the sequence is SEKKRGAGGH…DKSGISMDDF (129 aa). 2 stretches are compositionally biased toward polar residues: residues 121-130 and 157-167; these read IGSSLSSSDN and AVSQEQGQSLE. Phosphoserine is present on Ser-159. The HCFC1-binding motif (HBM) signature appears at 230 to 233; it reads LHSY. The residue at position 234 (Ser-234) is a Phosphoserine. Positions 235–312 are disordered; sequence FSSKHTRERP…EAVQSEHSDA (78 aa). Positions 242–262 are enriched in basic and acidic residues; the sequence is ERPSVPREPMDRKRLKREMEP. Polar residues predominate over residues 265 to 279; sequence SGNSVAQSPPSSSLT. Residues 280 to 289 are compositionally biased toward low complexity; sequence ATPQKASQSP. Positions 407–569 are nitrobindin; that stretch reads PPKLNPVVEP…LHITYKKVTP (163 aa). Thr-436 and His-559 together coordinate heme b.

This sequence in the C-terminal section; belongs to the nitrobindin family. In terms of assembly, homodimer. Requires heme b as cofactor.

The protein localises to the cytoplasm. It is found in the nucleus. The catalysed reaction is peroxynitrite = nitrate. The protein operates within nitrogen metabolism. Its function is as follows. Heme-binding protein able to scavenge peroxynitrite and to protect free L-tyrosine against peroxynitrite-mediated nitration, by acting as a peroxynitrite isomerase that converts peroxynitrite to nitrate. Therefore, this protein likely plays a role in peroxynitrite sensing and in the detoxification of reactive nitrogen and oxygen species (RNS and ROS, respectively). Is able to bind nitric oxide (NO) in vitro, but may act as a sensor of peroxynitrite levels in vivo, possibly modulating the transcriptional activity residing in the N-terminal region. In Mus musculus (Mouse), this protein is Peroxynitrite isomerase THAP4.